Here is a 157-residue protein sequence, read N- to C-terminus: Serine-protein kinase RsbW (157 aa).

It belongs to the anti-sigma-factor family.

The enzyme catalyses L-seryl-[protein] + ATP = O-phospho-L-seryl-[protein] + ADP + H(+). It catalyses the reaction L-threonyl-[protein] + ATP = O-phospho-L-threonyl-[protein] + ADP + H(+). Its function is as follows. Negative regulator of sigma-B activity. Phosphorylates and inactivates its specific antagonist protein, RsbV. Upon phosphorylation of RsbV, RsbW is released and binds to sigma-B, thereby blocking its ability to form an RNA polymerase holoenzyme (E-sigma-B). The chain is Serine-protein kinase RsbW from Listeria monocytogenes serovar 1/2a (strain ATCC BAA-679 / EGD-e).